A 238-amino-acid chain; its full sequence is Lipid transferase CIDEC (238 aa).

Positions 1 to 35 (MEYAMKSLSLLYPKSLSRHVSVRTSVVTQQLLSEP) are required for liquid-liquid phase separation (LLPS). Residues 41-118 (RARPCRVSTA…VLQKGQKWQP (78 aa)) enclose the CIDE-N domain.

Belongs to the CIDE family. Homodimer. Homooligomer; undergoes liquid-liquid phase separation (LLPS) via its N-terminus, facilitating lipid droplet fusion, occurs at the lipid droplet contact sites. Interacts with CIDEA. Interacts with PLIN1. Interacts with NFAT5; this interaction is direct and retains NFAT5 in the cytoplasm. Interacts with CEBPB. Interacts with isoform CLSTN3beta of CLSTN3; inhibiting the lipid transferase activity of CIDEC. Ubiquitinated and targeted to proteasomal degradation, resulting in a short half-life (about 15 minutes in 3T3-L1 cells). Protein stability depends on triaclyglycerol synthesis, fatty acid availability and lipid droplet formation. As to expression, expressed mainly in adipose tissue, small intestine, heart, colon and stomach and, at lower levels, in brain, kidney and liver.

It localises to the lipid droplet. The protein resides in the endoplasmic reticulum. The protein localises to the nucleus. The catalysed reaction is a triacyl-sn-glycerol(in) = a triacyl-sn-glycerol(out). Functionally, lipid transferase specifically expressed in white adipose tissue, which promotes unilocular lipid droplet formation by mediating lipid droplet fusion. Lipid droplet fusion promotes their enlargement, restricting lipolysis and favoring lipid storage. Localizes on the lipid droplet surface, at focal contact sites between lipid droplets, and mediates atypical lipid droplet fusion by undergoing liquid-liquid phase separation (LLPS) and promoting directional net neutral lipid transfer from the smaller to larger lipid droplets. The transfer direction may be driven by the internal pressure difference between the contacting lipid droplet pair. Its role in neutral lipid transfer and lipid droplet enlargement is activated by the interaction with PLIN1. May also act as a CEBPB coactivator in the white adipose tissue to control the expression of a subset of CEBPB downstream target genes, including SOCS1, SOCS3, TGFB1, TGFBR1, ID2 and XDH. When overexpressed in preadipocytes, induces apoptosis or increases cell susceptibility to apoptosis induced by serum deprivation or TGFB treatment. The polypeptide is Lipid transferase CIDEC (Homo sapiens (Human)).